The following is an 883-amino-acid chain: Protein SEY1 homolog (883 aa).

Residues 1–795 (MQMDRKTQII…ETGGKMSLKN (795 aa)) are Cytoplasmic-facing. The GB1/RHD3-type G domain occupies 33 to 279 (GFNYNVVAIL…IPSDGFAHYC (247 aa)). Position 43–50 (43–50 (GSQSSGKS)) interacts with GTP. The stretch at 673-693 (LDEIMDVLKSKLDEISDNLSS) forms a coiled coil. A helical transmembrane segment spans residues 796–816 (VPLFFWVILLILGWNELLFFI). Residues 817-819 (RFF) are Lumenal-facing. A helical membrane pass occupies residues 820–840 (FRLNIILPLFLAAAVILSTLF). Residues 841–883 (FNGNMEVLSTINKVVFFLAKSSFGFYRQLQTMGEKVAQVPTAD) lie on the Cytoplasmic side of the membrane.

Belongs to the TRAFAC class dynamin-like GTPase superfamily. GB1/RHD3 GTPase family. RHD3 subfamily.

The protein localises to the endoplasmic reticulum membrane. In terms of biological role, probable GTP-binding protein involved in generating and maintaining the structure of the tubular endoplasmic reticulum network. This chain is Protein SEY1 homolog, found in Plasmodium knowlesi (strain H).